Here is a 368-residue protein sequence, read N- to C-terminus: ICEBs1 integrase (368 aa).

Positions 61 to 143 constitute a Core-binding (CB) domain; it reads VSFPTLISIY…SLSKIFDTAV (83 aa). The 199-residue stretch at 164 to 362 folds into the Tyr recombinase domain; sequence KKMKFWRPEE…YPNKQKEMAD (199 aa). Active-site residues include Arg201, Lys239, His313, Arg316, and His339. Tyr349 (O-(3'-phospho-DNA)-tyrosine intermediate) is an active-site residue.

This sequence belongs to the 'phage' integrase family.

Putative integrase that is involved in the insertion of the integrative and conjugative element ICEBs1. Required for the excision of ICEBs1 from the donor cell genome and subsequent integration in the recipient cell genome. Appears not to be transferred through the mating pore. Integration of ICEBs1 involves an attachment site in the chromosome, attB, and a site in the circular form of ICEBs1, attICEBs1. In Bacillus subtilis (strain 168), this protein is ICEBs1 integrase (int).